The following is a 101-amino-acid chain: MSAISQERLLQVLLAPQISEKATYVADKNEQVVFKVATSATKPEVKAAVELLFKVEVKSVQISNVKGKSKRFGKMMGRRKDWKKAFVCLKPGQEINFVAGE.

This sequence belongs to the universal ribosomal protein uL23 family. Part of the 50S ribosomal subunit. Contacts protein L29, and trigger factor when it is bound to the ribosome.

One of the early assembly proteins it binds 23S rRNA. One of the proteins that surrounds the polypeptide exit tunnel on the outside of the ribosome. Forms the main docking site for trigger factor binding to the ribosome. This is Large ribosomal subunit protein uL23 from Azoarcus sp. (strain BH72).